Here is a 349-residue protein sequence, read N- to C-terminus: Ion-translocating oxidoreductase complex subunit D (349 aa).

Helical transmembrane passes span 20–40 (IMFL…YFFG), 42–62 (GVLI…IIIL), 83–105 (VLLG…CFFA), and 120–140 (IFNP…VHMT). T184 carries the FMN phosphoryl threonine modification. 5 helical membrane passes run 212–232 (IVSI…CFLL), 236–256 (VICW…SSIT), 263–283 (FFCS…AFFI), 291–311 (SCTK…VWII), and 319–339 (DGIA…DAYL).

The protein belongs to the NqrB/RnfD family. As to quaternary structure, the complex is composed of six subunits: RnfA, RnfB, RnfC, RnfD, RnfE and RnfG. FMN serves as cofactor.

The protein localises to the cell inner membrane. Its function is as follows. Part of a membrane-bound complex that couples electron transfer with translocation of ions across the membrane. This is Ion-translocating oxidoreductase complex subunit D from Buchnera aphidicola subsp. Schizaphis graminum (strain Sg).